Reading from the N-terminus, the 353-residue chain is Protein-arginine kinase (353 aa).

In terms of domain architecture, Phosphagen kinase C-terminal spans 24-256 (IVLSSRIRLA…RTVIDTEEQA (233 aa)). Residues 27–31 (SSRIR), H93, R127, 178–182 (RASVM), and 209–214 (RGLYGE) each bind ATP. Positions 339-344 (RDVRRA) match the RDXXRA motif of the pArg binding pocket involved in allosteric regulation motif.

The protein belongs to the ATP:guanido phosphotransferase family.

It carries out the reaction L-arginyl-[protein] + ATP = N(omega)-phospho-L-arginyl-[protein] + ADP + H(+). Appears to be allosterically activated by the binding of pArg-containing polypeptides to the pArg-binding pocket localized in the C-terminal domain of McsB. Catalyzes the specific phosphorylation of arginine residues in proteins. This Symbiobacterium thermophilum (strain DSM 24528 / JCM 14929 / IAM 14863 / T) protein is Protein-arginine kinase.